The primary structure comprises 382 residues: Putative acetyl-CoA C-acetyltransferase VraB (382 aa).

The Acyl-thioester intermediate role is filled by Cys-86. Catalysis depends on His-338, which acts as the Proton acceptor.

This sequence belongs to the thiolase-like superfamily. Thiolase family.

This chain is Putative acetyl-CoA C-acetyltransferase VraB (vraB), found in Staphylococcus epidermidis (strain ATCC 35984 / DSM 28319 / BCRC 17069 / CCUG 31568 / BM 3577 / RP62A).